A 749-amino-acid polypeptide reads, in one-letter code: Photosystem I P700 chlorophyll a apoprotein A2 (749 aa).

Transmembrane regions (helical) follow at residues 46–69 (LFSTHFGHLAVIGLWVAGNLFHIA), 135–158 (LYQGAIFIDILVAWLLFGGWLHLQ), 175–199 (MNHHLAVLFGFTNIAWTGHLVHVAI), 273–291 (ISHHHIAIGVFMIIGGHMY), 343–366 (LHFQLGLALACLGTAASLVAHHMG), 382–408 (AALYTHHQYIAIFLMCGAFSHGAIFFV), 430–452 (ALISHLSWVCMLLGFHTLALYLH), and 532–550 (FLVHHGIALGLHTTALILI). [4Fe-4S] cluster contacts are provided by C574 and C583. Helical transmembrane passes span 590-611 (STYMAIFWALNTIAWATYYWHW) and 658-680 (LSPWAYMFLAGHLVWATGFMFLI). Divinyl chlorophyll a-binding residues include H669, M677, and Y685. W686 is a binding site for phylloquinone. Residues 722–742 (LVGVTHFAVGNIFTFGAFVIA) traverse the membrane as a helical segment.

Belongs to the PsaA/PsaB family. The PsaA/B heterodimer binds the P700 chlorophyll special pair and subsequent electron acceptors. PSI consists of a core antenna complex that captures photons, and an electron transfer chain that converts photonic excitation into a charge separation. The cyanobacterial PSI reaction center is composed of one copy each of PsaA,B,C,D,E,F,I,J,K,L,M and X, and forms trimeric complexes. PSI electron transfer chain: 5 divinyl chlorophyll a, 1 divinyl chlorophyll a', 2 phylloquinones and 3 4Fe-4S clusters. PSI core antenna: 90 divinyl chlorophyll a, 22 carotenoids, 3 phospholipids and 1 galactolipid. P700 is a divinyl chlorophyll a/divinyl chlorophyll a' dimer, A0 is one or more divinyl chlorophyll a, A1 is one or both phylloquinones and FX is a shared 4Fe-4S iron-sulfur center. is required as a cofactor.

The protein localises to the cellular thylakoid membrane. It catalyses the reaction reduced [plastocyanin] + hnu + oxidized [2Fe-2S]-[ferredoxin] = oxidized [plastocyanin] + reduced [2Fe-2S]-[ferredoxin]. In terms of biological role, psaA and PsaB bind P700, the primary electron donor of photosystem I (PSI), as well as the electron acceptors A0, A1 and FX. PSI is a plastocyanin/cytochrome c6-ferredoxin oxidoreductase, converting photonic excitation into a charge separation, which transfers an electron from the donor P700 chlorophyll pair to the spectroscopically characterized acceptors A0, A1, FX, FA and FB in turn. Oxidized P700 is reduced on the lumenal side of the thylakoid membrane by plastocyanin or cytochrome c6. This is Photosystem I P700 chlorophyll a apoprotein A2 from Prochlorococcus marinus (strain MIT 9313).